The sequence spans 322 residues: 4-hydroxythreonine-4-phosphate dehydrogenase (322 aa).

Thr-132 contributes to the substrate binding site. The a divalent metal cation site is built by His-160, His-205, and His-260. The substrate site is built by Lys-268, Asn-277, and Arg-286.

The protein belongs to the PdxA family. In terms of assembly, homodimer. Zn(2+) is required as a cofactor. The cofactor is Mg(2+). It depends on Co(2+) as a cofactor.

The protein localises to the cytoplasm. It carries out the reaction 4-(phosphooxy)-L-threonine + NAD(+) = 3-amino-2-oxopropyl phosphate + CO2 + NADH. It participates in cofactor biosynthesis; pyridoxine 5'-phosphate biosynthesis; pyridoxine 5'-phosphate from D-erythrose 4-phosphate: step 4/5. Functionally, catalyzes the NAD(P)-dependent oxidation of 4-(phosphooxy)-L-threonine (HTP) into 2-amino-3-oxo-4-(phosphooxy)butyric acid which spontaneously decarboxylates to form 3-amino-2-oxopropyl phosphate (AHAP). This chain is 4-hydroxythreonine-4-phosphate dehydrogenase, found in Xanthomonas oryzae pv. oryzae (strain PXO99A).